A 372-amino-acid polypeptide reads, in one-letter code: MKIGIPREIKNNENRVGLSPSGVHALVESGHTVLVETNAGSGSFFEDVDYKEAGAEIVAEQAKVWDVDMVIKVKEPLESEYTYFKEGLVLFTYLHLANEEKLTQALIDRKVISIAYETVQLPDRSSPLLSPMSEVAGRMSAQVGAEFLQKLNGGMGILLGGVPGVPKGKVTIIGGGQAGTNAAKIALGLGADVTILDVNPKRLQQLDDLFGGRVHTIMSNPLNIELYVKQSDLVIGAVLIPGAKAPRLVTEDMIKQMKNGSVIIDIAIDQGGIFETTDKITTHDDPTYIKHGVVHYAVANMPGAVPRTSTLALNNATLPYALMLANKGYREAFKSNQPLSLGLNTYKGHVTNKGVAEAFEMEYKSVEEALQL.

Residue His-95 is part of the active site. 169 to 199 (KVTIIGGGQAGTNAAKIALGLGADVTILDVN) serves as a coordination point for NAD(+).

The protein belongs to the AlaDH/PNT family.

It catalyses the reaction L-alanine + NAD(+) + H2O = pyruvate + NH4(+) + NADH + H(+). Its pathway is amino-acid degradation; L-alanine degradation via dehydrogenase pathway; NH(3) and pyruvate from L-alanine: step 1/1. May play a role in cell wall synthesis as L-alanine is an important constituent of the peptidoglycan layer. This chain is Alanine dehydrogenase 2 (ald2), found in Staphylococcus aureus (strain Mu50 / ATCC 700699).